The following is a 324-amino-acid chain: Phospho-N-acetylmuramoyl-pentapeptide-transferase (324 aa).

A run of 10 helical transmembrane segments spans residues 5–25 (VMVLAIILSFLITVILSPLFI), 50–70 (GTPTMGGIMILLSIVVTTLLM), 77–97 (LSVETYLLLFVTIGYGLLGFL), 117–137 (LIGQLMIAIVFYFVYQRSGFS), 147–167 (LSINLGFGYVLLLIFMLVGGS), 176–196 (LDGLLAGTAAIAFGAYAVLAW), 203–223 (IAIFCVSVVGAVLGFLVFNAH), 227–247 (VFMGDTGSLALGGAIATVAIL), 250–270 (LEILLVIIGGVFVIETLSVII), and 304–324 (VTFWAVGLLFAMLGIYIEVWI).

This sequence belongs to the glycosyltransferase 4 family. MraY subfamily. Mg(2+) serves as cofactor.

It localises to the cell membrane. The enzyme catalyses UDP-N-acetyl-alpha-D-muramoyl-L-alanyl-gamma-D-glutamyl-meso-2,6-diaminopimeloyl-D-alanyl-D-alanine + di-trans,octa-cis-undecaprenyl phosphate = di-trans,octa-cis-undecaprenyl diphospho-N-acetyl-alpha-D-muramoyl-L-alanyl-D-glutamyl-meso-2,6-diaminopimeloyl-D-alanyl-D-alanine + UMP. It functions in the pathway cell wall biogenesis; peptidoglycan biosynthesis. In terms of biological role, catalyzes the initial step of the lipid cycle reactions in the biosynthesis of the cell wall peptidoglycan: transfers peptidoglycan precursor phospho-MurNAc-pentapeptide from UDP-MurNAc-pentapeptide onto the lipid carrier undecaprenyl phosphate, yielding undecaprenyl-pyrophosphoryl-MurNAc-pentapeptide, known as lipid I. The sequence is that of Phospho-N-acetylmuramoyl-pentapeptide-transferase from Geobacillus sp. (strain WCH70).